The primary structure comprises 635 residues: Phosphatidylserine decarboxylase proenzyme 3 (635 aa).

Residues 1 to 42 (MGNGNSTETKESRRSKMRKKIQNFRSRRRLSRPGSGSVSGLA) are disordered. Residue G2 is the site of N-myristoyl glycine attachment. Positions 15–31 (SKMRKKIQNFRSRRRLS) are enriched in basic residues. The region spanning 22–147 (QNFRSRRRLS…VVQEPDSTCK (126 aa)) is the C2 domain. 2 consecutive EF-hand domains span residues 180 to 210 (AKRILSIVDYDEDGKLSFSEFSDLMNAFGNV) and 211 to 246 (VAANKKEELFKAADLNGDGVVTIDELAALLAVQQEQ). Residues D188, D190, D192, K194, E199, D224, N226, D228, and E235 each contribute to the Ca(2+) site. Catalysis depends on charge relay system; for autoendoproteolytic cleavage activity residues D442, H498, and S586. The active-site Schiff-base intermediate with substrate; via pyruvic acid; for decarboxylase activity is S586. S586 is modified (pyruvic acid (Ser); by autocatalysis).

Belongs to the phosphatidylserine decarboxylase family. PSD-B subfamily. Eukaryotic type II sub-subfamily. In terms of assembly, heterodimer of a large membrane-associated beta subunit and a small pyruvoyl-containing alpha subunit. The cofactor is pyruvate. Post-translationally, is synthesized initially as an inactive proenzyme. Formation of the active enzyme involves a self-maturation process in which the active site pyruvoyl group is generated from an internal serine residue via an autocatalytic post-translational modification. Two non-identical subunits are generated from the proenzyme in this reaction, and the pyruvate is formed at the N-terminus of the alpha chain, which is derived from the carboxyl end of the proenzyme. The autoendoproteolytic cleavage occurs by a canonical serine protease mechanism, in which the side chain hydroxyl group of the serine supplies its oxygen atom to form the C-terminus of the beta chain, while the remainder of the serine residue undergoes an oxidative deamination to produce ammonia and the pyruvoyl prosthetic group on the alpha chain. During this reaction, the Ser that is part of the protease active site of the proenzyme becomes the pyruvoyl prosthetic group, which constitutes an essential element of the active site of the mature decarboxylase. Expressed in roots, leaves, stems and flowers.

The protein localises to the endoplasmic reticulum membrane. The enzyme catalyses a 1,2-diacyl-sn-glycero-3-phospho-L-serine + H(+) = a 1,2-diacyl-sn-glycero-3-phosphoethanolamine + CO2. Its pathway is phospholipid metabolism; phosphatidylethanolamine biosynthesis; phosphatidylethanolamine from CDP-diacylglycerol: step 2/2. Functionally, catalyzes the formation of phosphatidylethanolamine (PtdEtn) from phosphatidylserine (PtdSer). Plays a central role in phospholipid metabolism and in the interorganelle trafficking of phosphatidylserine. Contributes only to a minor proportion of PtdEtn production. The protein is Phosphatidylserine decarboxylase proenzyme 3 (PSD3) of Arabidopsis thaliana (Mouse-ear cress).